The following is a 402-amino-acid chain: Deoxyguanosinetriphosphate triphosphohydrolase-like protein 2 (402 aa).

The region spanning 72–215 (RLTHSLEVAQ…MDLADEIAYA (144 aa)) is the HD domain.

This sequence belongs to the dGTPase family. Type 2 subfamily.

In Vibrio cholerae serotype O1 (strain ATCC 39315 / El Tor Inaba N16961), this protein is Deoxyguanosinetriphosphate triphosphohydrolase-like protein 2.